A 123-amino-acid chain; its full sequence is Small ribosomal subunit protein uS12 (123 aa).

Aspartate 89 carries the post-translational modification 3-methylthioaspartic acid. Residues 104–123 (TAGVKDRKQARSKYGAKRPK) form a disordered region. Basic residues predominate over residues 113-123 (ARSKYGAKRPK).

Belongs to the universal ribosomal protein uS12 family. In terms of assembly, part of the 30S ribosomal subunit. Contacts proteins S8 and S17. May interact with IF1 in the 30S initiation complex.

With S4 and S5 plays an important role in translational accuracy. Functionally, interacts with and stabilizes bases of the 16S rRNA that are involved in tRNA selection in the A site and with the mRNA backbone. Located at the interface of the 30S and 50S subunits, it traverses the body of the 30S subunit contacting proteins on the other side and probably holding the rRNA structure together. The combined cluster of proteins S8, S12 and S17 appears to hold together the shoulder and platform of the 30S subunit. The sequence is that of Small ribosomal subunit protein uS12 from Neisseria gonorrhoeae (strain ATCC 700825 / FA 1090).